The following is a 158-amino-acid chain: MNIYMTDEGKLLTEEQLKLVEAILVYTATEEKIEANSELSVTFVTNDEIQQINREWRGKDQATDVISFAMDELGEDEIDFELLEDEPVVLGDLIISVERCREQAAEYGNHFERELGFLAVHGFLHLLGYDHIEKADEDIMTKRQEEILHHFELYRGKL.

H121, H125, and H131 together coordinate Zn(2+).

It belongs to the endoribonuclease YbeY family. It depends on Zn(2+) as a cofactor.

The protein localises to the cytoplasm. In terms of biological role, single strand-specific metallo-endoribonuclease involved in late-stage 70S ribosome quality control and in maturation of the 3' terminus of the 16S rRNA. The sequence is that of Endoribonuclease YbeY from Exiguobacterium sibiricum (strain DSM 17290 / CCUG 55495 / CIP 109462 / JCM 13490 / 255-15).